The primary structure comprises 132 residues: Small ribosomal subunit protein uS8 (132 aa).

It belongs to the universal ribosomal protein uS8 family. In terms of assembly, part of the 30S ribosomal subunit. Contacts proteins S5 and S12.

In terms of biological role, one of the primary rRNA binding proteins, it binds directly to 16S rRNA central domain where it helps coordinate assembly of the platform of the 30S subunit. The chain is Small ribosomal subunit protein uS8 from Flavobacterium johnsoniae (strain ATCC 17061 / DSM 2064 / JCM 8514 / BCRC 14874 / CCUG 350202 / NBRC 14942 / NCIMB 11054 / UW101) (Cytophaga johnsonae).